Reading from the N-terminus, the 168-residue chain is Small ribosomal subunit protein uS5 (168 aa).

The 64-residue stretch at Leu-13–Val-76 folds into the S5 DRBM domain.

This sequence belongs to the universal ribosomal protein uS5 family. Part of the 30S ribosomal subunit. Contacts proteins S4 and S8.

Its function is as follows. With S4 and S12 plays an important role in translational accuracy. In terms of biological role, located at the back of the 30S subunit body where it stabilizes the conformation of the head with respect to the body. This is Small ribosomal subunit protein uS5 from Pseudoalteromonas translucida (strain TAC 125).